Here is a 336-residue protein sequence, read N- to C-terminus: Oxaloacetate decarboxylase (336 aa).

The Pyruvate carboxyltransferase domain maps to 10-258; the sequence is PIVLDTTVRD…LAAVDLDRIF (249 aa). Positions 19, 197, and 199 each coordinate Mn(2+).

The protein belongs to the 4-hydroxy-2-oxovalerate aldolase family. In terms of assembly, homodimer. A divalent metal cation serves as cofactor.

It catalyses the reaction oxaloacetate + H(+) = pyruvate + CO2. Activity is abolished upon incubation with Chelex and EDTA. Functionally, exhibits oxaloacetate decarboxylase activity. Lacks any detectable aldolase activity with 4-hydroxy-2-oxopentanoate (HOPA), 4-hydroxy-2-oxohexanoate (HOHA) or other 4-hydroxy-2-oxoacids. In Mycobacterium tuberculosis (strain ATCC 25618 / H37Rv), this protein is Oxaloacetate decarboxylase.